Here is a 422-residue protein sequence, read N- to C-terminus: Tryptophan synthase beta chain (422 aa).

Lys87 is subject to N6-(pyridoxal phosphate)lysine.

The protein belongs to the TrpB family. Tetramer of two alpha and two beta chains. It depends on pyridoxal 5'-phosphate as a cofactor.

It catalyses the reaction (1S,2R)-1-C-(indol-3-yl)glycerol 3-phosphate + L-serine = D-glyceraldehyde 3-phosphate + L-tryptophan + H2O. Its pathway is amino-acid biosynthesis; L-tryptophan biosynthesis; L-tryptophan from chorismate: step 5/5. Its function is as follows. The beta subunit is responsible for the synthesis of L-tryptophan from indole and L-serine. In Haloferax volcanii (strain ATCC 29605 / DSM 3757 / JCM 8879 / NBRC 14742 / NCIMB 2012 / VKM B-1768 / DS2) (Halobacterium volcanii), this protein is Tryptophan synthase beta chain (trpB).